We begin with the raw amino-acid sequence, 326 residues long: G-protein coupled receptor 1 (326 aa).

Residue serine 2 is modified to N-acetylserine. Residues 2-23 (SAVLTAGGGLTAGDRSIITAIN) lie on the Extracellular side of the membrane. Residues 24–44 (TGASSLSFVGSAFIVLCYCLF) traverse the membrane as a helical segment. Over 45–51 (KELRKFS) the chain is Cytoplasmic. The chain crosses the membrane as a helical span at residues 52-72 (FKLVFYLALSDMLCSFFLIVG). The Extracellular segment spans residues 73–84 (DPSKGFICYAQG). Cysteine 80 and cysteine 151 are oxidised to a cystine. The chain crosses the membrane as a helical span at residues 85 to 105 (YTTHFFCVASFLWTTTIAFTL). The Cytoplasmic portion of the chain corresponds to 106–120 (HRTVVKHKTDVEDLE). A helical membrane pass occupies residues 121 to 141 (AMFHLYVWGTSLVVTVIRSFG). At 142–160 (NNHSHLGPWCWTQTGLKGK) the chain is on the extracellular side. The N-linked (GlcNAc...) asparagine glycan is linked to asparagine 143. Residues 161-181 (AVHFLTFYAPLWGAILYNGFT) traverse the membrane as a helical segment. Over 182–213 (YFQVIRMLRNARRMAVGMSDRVDQFDNRAELK) the chain is Cytoplasmic. A helical transmembrane segment spans residues 214–234 (VLNRWGYYPLILIGSWAFGTI). Residues 235–246 (NRIHDFIEPGHK) lie on the Extracellular side of the membrane. Residues 247–267 (IFWLSVLDVGTAALMGLFNSI) traverse the membrane as a helical segment. Residues 268-326 (AYGFNSSVRRAIHERLELFLPERLYRWLPSNFRPKNHLILHQQQQQRSEMVSLKTEDQQ) lie on the Cytoplasmic side of the membrane.

Belongs to the G-protein coupled receptor 2 family. In terms of assembly, interacts with GPA1. As to expression, mostly present in the meristematic regions. Expressed at low levels in seedlings, vascular tissues of cotyledons, hypocotyl, and roots, stems, leaves, flowering buds and siliques. In dark-grown seedlings, localized in the cotyledons and the hook.

The protein resides in the cell membrane. Functionally, together with GPA1, may regulate the cell cycle via a signaling cascade that uses phosphatidylinositol-specific phospholipase C (PI-PLC) as an effector and inositol 1,4,5-trisphosphate(IP(3)) as a second messenger. Promotes PI-PLC activity and IP(3) accumulation. Involved in the blue light (BL) signaling. Together with GPA1 and ADT3, required for BL-mediated synthesis of phenylpyruvate and subsequently of phenylalanine (Phe), in etiolated seedlings. Probably involved in cytokinin signal transduction. Plays a positive role in gibberellin- (GA) and brassinosteroid- (BR) regulated seed germination, probably independently of a heterotrimeric G-protein. Mediates seed dormancy abolition, and promotes seed germination and flowering. In Arabidopsis thaliana (Mouse-ear cress), this protein is G-protein coupled receptor 1 (GCR1).